The sequence spans 184 residues: dITP/XTP pyrophosphatase (184 aa).

Position 7–12 (7–12 (TSNPGK)) interacts with substrate. 2 residues coordinate Mg(2+): Glu36 and Asp65. The active-site Proton acceptor is the Asp65. Substrate is bound by residues Ser66, 139-142 (FGFD), Lys162, and 167-168 (HR).

It belongs to the HAM1 NTPase family. In terms of assembly, homodimer. The cofactor is Mg(2+).

The enzyme catalyses XTP + H2O = XMP + diphosphate + H(+). The catalysed reaction is dITP + H2O = dIMP + diphosphate + H(+). It catalyses the reaction ITP + H2O = IMP + diphosphate + H(+). Pyrophosphatase that catalyzes the hydrolysis of nucleoside triphosphates to their monophosphate derivatives, with a high preference for the non-canonical purine nucleotides XTP (xanthosine triphosphate), dITP (deoxyinosine triphosphate) and ITP. Seems to function as a house-cleaning enzyme that removes non-canonical purine nucleotides from the nucleotide pool, thus preventing their incorporation into DNA/RNA and avoiding chromosomal lesions. This chain is dITP/XTP pyrophosphatase, found in Thermococcus kodakarensis (strain ATCC BAA-918 / JCM 12380 / KOD1) (Pyrococcus kodakaraensis (strain KOD1)).